We begin with the raw amino-acid sequence, 473 residues long: Sensor histidine kinase YclK (473 aa).

At 1–9 the chain is on the cytoplasmic side; that stretch reads MMKIKYLYQ. A helical transmembrane segment spans residues 10 to 30; sequence LLLSHISILILAFVIIISLFS. The Extracellular segment spans residues 31 to 164; the sequence is HFVKEFAYQN…GVEQMVNQVN (134 aa). Residues 165–185 traverse the membrane as a helical segment; sequence LYMFYAVISTLVITILVSWLL. Over 186–473 the chain is Cytoplasmic; sequence SKFHVKRIQK…IRLPLTAKQQ (288 aa). The HAMP domain maps to 187–239; the sequence is KFHVKRIQKLREATDKVASGDYDIHLENSYGDEIGVLASDFNIMAKKLKQSRD. The Histidine kinase domain occupies 254–470; that stretch reads DVSHELKTPL…KFIIRLPLTA (217 aa). His-257 carries the post-translational modification Phosphohistidine; by autocatalysis.

The protein localises to the cell membrane. It catalyses the reaction ATP + protein L-histidine = ADP + protein N-phospho-L-histidine.. Functionally, could be member of the two-component regulatory system YclK/YclJ. Potentially phosphorylates YclJ. The protein is Sensor histidine kinase YclK (yclK) of Bacillus subtilis (strain 168).